Reading from the N-terminus, the 155-residue chain is Ribosomal RNA large subunit methyltransferase H (155 aa).

S-adenosyl-L-methionine contacts are provided by residues L73, G104, and 123–128 (LSALTL).

It belongs to the RNA methyltransferase RlmH family. As to quaternary structure, homodimer.

The protein resides in the cytoplasm. The enzyme catalyses pseudouridine(1915) in 23S rRNA + S-adenosyl-L-methionine = N(3)-methylpseudouridine(1915) in 23S rRNA + S-adenosyl-L-homocysteine + H(+). Functionally, specifically methylates the pseudouridine at position 1915 (m3Psi1915) in 23S rRNA. The polypeptide is Ribosomal RNA large subunit methyltransferase H (Coxiella burnetii (strain Dugway 5J108-111)).